Consider the following 148-residue polypeptide: Phosphoribosyl-AMP cyclohydrolase (148 aa).

Residue Asp-91 coordinates Mg(2+). Zn(2+) is bound at residue Cys-92. Mg(2+)-binding residues include Asp-93 and Asp-95. Residues Cys-109 and Cys-116 each coordinate Zn(2+).

It belongs to the PRA-CH family. As to quaternary structure, homodimer. The cofactor is Mg(2+). Zn(2+) serves as cofactor.

It localises to the cytoplasm. It catalyses the reaction 1-(5-phospho-beta-D-ribosyl)-5'-AMP + H2O = 1-(5-phospho-beta-D-ribosyl)-5-[(5-phospho-beta-D-ribosylamino)methylideneamino]imidazole-4-carboxamide. Its pathway is amino-acid biosynthesis; L-histidine biosynthesis; L-histidine from 5-phospho-alpha-D-ribose 1-diphosphate: step 3/9. Functionally, catalyzes the hydrolysis of the adenine ring of phosphoribosyl-AMP. The chain is Phosphoribosyl-AMP cyclohydrolase from Rhodopseudomonas palustris (strain HaA2).